A 551-amino-acid chain; its full sequence is MVAHAEINNLSFVYADENEYALQHISLSIQKGEFIVLAGGSGSGKTTLLKHFKKELLPIGKRTGDTYYDGTLLENVPDLLSAQEIGMVFQNPENQLVMDTVIQELAFSLENIGLPSHIIQKRIAELISFLGFQDLLHQSVHTLSGGQKQLVNLAAVLVMQPKLLLLDEPTAQLDPIAAKEFLGLLKRINEELGITIVLSEHRLDEVIPLATRVICMSNGRIVYDGSPKTVVANMWEVEKFRPFIPQIPRLFLEWNAKDIPFTVREAQMKLNNFSAISYVNKPIAQSEKQEVILSAEHISFQYEKNSPLILRDLTVSIEKGEWVALVGKNGTGKSTLLTLLAGLQKARRGKVKWNGKVIHKIDSKERFKSIGYVSQHPYYHFTFDTVWDEVYERARELYGEQGKEIAEHQLKKFWLYGLKERHPHDCSGGEQQLLALCTTLLSKPTLLLLDEPTKGLDPWKKERVGELFRKLQKEGTTIVMATHDIEFAAKYVDQCMMLFDGAVIMNDAPKEFFSGNFFYTTSINRFIRKELPYALTWEDVYEACPNDILHS.

2 ABC transporter domains span residues 5-243 (AEIN…FRPF) and 293-525 (LSAE…SINR). ATP contacts are provided by residues 39-46 (GGSGSGKT) and 327-334 (GKNGTGKS).

The protein belongs to the ABC transporter superfamily.

Its subcellular location is the cell membrane. Probably part of an ABC transporter complex. Responsible for energy coupling to the transport system. The polypeptide is Putative ABC transporter ATP-binding protein BT9727_3105 (Bacillus thuringiensis subsp. konkukian (strain 97-27)).